The chain runs to 858 residues: Coiled-coil and C2 domain-containing protein 1B (858 aa).

Disordered stretches follow at residues 112 to 164 (VLGV…GASQ), 180 to 199 (AAAS…CERG), 204 to 284 (ESQL…ALLS), 329 to 352 (VDLS…APTA), and 470 to 533 (EKLA…SPSV). The segment covering 114-143 (GVDEETEPLDGDEVADPGGSEEENGLEDTE) has biased composition (acidic residues). A compositionally biased stretch (low complexity) spans 153 to 164 (ASAPAAQAGASQ). The stretch at 166 to 212 (LHALLEERIHNYREAAASAKEAGEAAKARRCERGLKTLESQLASVRR) forms a coiled coil. Over residues 186-199 (EAGEAAKARRCERG) the composition is skewed to basic and acidic residues. At S209 the chain carries Phosphoserine. Low complexity predominate over residues 520 to 532 (PRASSSKESPSPS). S593 carries the post-translational modification Phosphoserine. T596 bears the Phosphothreonine mark. Positions 611–635 (RLSQKAEEVYAQLQKMLLEQQEKCL) form a coiled coil. Residues 676–815 (DPPTHHFELK…ENECEIREIV (140 aa)) form the C2 domain.

This sequence belongs to the CC2D1 family. Interacts with CHMP4B. Widely distributed in brain and peripheral tissues.

It localises to the nucleus. In terms of biological role, transcription factor that binds specifically to the DRE (dual repressor element) and represses HTR1A gene transcription in neuronal cells. This chain is Coiled-coil and C2 domain-containing protein 1B (CC2D1B), found in Homo sapiens (Human).